Consider the following 94-residue polypeptide: Small ribosomal subunit protein bS18 (94 aa).

Positions 1–11 are enriched in polar residues; it reads MANERPTSQQR. Positions 1 to 24 are disordered; the sequence is MANERPTSQQRPAGGPRKRRPFQR.

This sequence belongs to the bacterial ribosomal protein bS18 family. In terms of assembly, part of the 30S ribosomal subunit. Forms a tight heterodimer with protein bS6.

Its function is as follows. Binds as a heterodimer with protein bS6 to the central domain of the 16S rRNA, where it helps stabilize the platform of the 30S subunit. This is Small ribosomal subunit protein bS18 from Pelobacter propionicus (strain DSM 2379 / NBRC 103807 / OttBd1).